A 353-amino-acid chain; its full sequence is O-antigen biosynthesis glycosyltransferase WclY (353 aa).

Residues 116-136 (SLIWGLLWCSIWLFFDKLVIL) traverse the membrane as a helical segment. UDP-binding residues include Asn190 and Glu271. The E(x7)E glycosyltransferase motif signature appears at 263–271 (EGFGLTVLE).

It belongs to the glycosyltransferase group 1 family. Glycosyltransferase 4 subfamily.

It is found in the membrane. It functions in the pathway bacterial outer membrane biogenesis; LPS O-antigen biosynthesis. Its function is as follows. Involved in the assembly of the O-repeating unit during O-antigen biosynthesis. N-acetylglucosamine transferase accountable for the alpha-D-GlcNAc-1,4-beta-D-Gal linkage within the O-antigen. The protein is O-antigen biosynthesis glycosyltransferase WclY of Escherichia coli.